The primary structure comprises 254 residues: Allene oxide cyclase 4, chloroplastic (254 aa).

The N-terminal 52 residues, 1–52, are a transit peptide targeting the chloroplast; sequence MIMASSAAASISMITLRNLSRNHQSHQSTFLGFSRSFHNQRISSNSPGLSTR.

Belongs to the allene oxide cyclase family. Highly expressed in fully developed leaves.

The protein resides in the plastid. Its subcellular location is the chloroplast. The enzyme catalyses (9Z,13S,15Z)-12,13-epoxyoctadeca-9,11,15-trienoate = (9S,13S,15Z)-12-oxophyto-10,15-dienoate. Involved in the production of 12-oxo-phytodienoic acid (OPDA), a precursor of jasmonic acid. The protein is Allene oxide cyclase 4, chloroplastic (AOC4) of Arabidopsis thaliana (Mouse-ear cress).